We begin with the raw amino-acid sequence, 573 residues long: MANRQQPSPMPTAKYRGYDQVDIADRTWPNQRITTAPRWLSTDLRDGNQALIDPMSPVRKRAMFDLLVKMGYKEIEVGFPASGQTDFDFVRSIIEEPGAIPDDVTISVLTQAREDLIERTVESLKGARRATVHLYNATAPVFRRVVFRGSRDDIKQIAVDGTRLVMEYAEKLLGPETEFGYQYSPEIFTDTELDFALEVCEAVMDTYQPGPGREIILNLPATVERSTPSTHADRFEWMGRNLSRREHVCLSVHPHNDRGTAVAAAELALMAGADRIEGCLFGQGERTGNVDLVTLGMNLFSQGVDPQIDFSDIDEIRRTWEYCNQMEVHPRHPYVGDLVYTSFSGSHQDAIKKGFDAMEADAAARGVTVDDIEWAVPYLPIDPKDVGRSYEAVIRVNSQSGKGGIAYVLKNDHSLDLPRRMQIEFSKLIQAKTDAEGGEITPTAIWDVFQDEYLPNPDNPWGRIQVANGQTTTDRDGVDTLTVDATVDGAETTLVGSGNGPISAFFHALQGVGIDVRLLDYQEHTMSEGASAQAASYIECAIGDKVLWGIGIDANTTRASLKAVVSAVNRATR.

The 278-residue stretch at 37-314 folds into the Pyruvate carboxyltransferase domain; it reads PRWLSTDLRD…DPQIDFSDID (278 aa). Mg(2+) contacts are provided by D46, H253, H255, and N289. Positions 456-573 are regulatory domain; the sequence is NPDNPWGRIQ…VVSAVNRATR (118 aa).

This sequence belongs to the alpha-IPM synthase/homocitrate synthase family. LeuA type 2 subfamily. In terms of assembly, homodimer. Requires Mg(2+) as cofactor.

Its subcellular location is the cytoplasm. The enzyme catalyses 3-methyl-2-oxobutanoate + acetyl-CoA + H2O = (2S)-2-isopropylmalate + CoA + H(+). It functions in the pathway amino-acid biosynthesis; L-leucine biosynthesis; L-leucine from 3-methyl-2-oxobutanoate: step 1/4. Functionally, catalyzes the condensation of the acetyl group of acetyl-CoA with 3-methyl-2-oxobutanoate (2-ketoisovalerate) to form 3-carboxy-3-hydroxy-4-methylpentanoate (2-isopropylmalate). The protein is 2-isopropylmalate synthase of Streptomyces coelicolor (strain ATCC BAA-471 / A3(2) / M145).